The chain runs to 530 residues: Autoinducer-2 kinase (530 aa).

Belongs to the FGGY kinase family.

It localises to the cytoplasm. The catalysed reaction is (S)-4,5-dihydroxypentane-2,3-dione + ATP = (2S)-2-hydroxy-3,4-dioxopentyl phosphate + ADP + H(+). Its function is as follows. Catalyzes the phosphorylation of autoinducer-2 (AI-2) to phospho-AI-2, which subsequently inactivates the transcriptional regulator LsrR and leads to the transcription of the lsr operon. Phosphorylates the ring-open form of (S)-4,5-dihydroxypentane-2,3-dione (DPD), which is the precursor to all AI-2 signaling molecules, at the C5 position. The sequence is that of Autoinducer-2 kinase from Escherichia coli O139:H28 (strain E24377A / ETEC).